We begin with the raw amino-acid sequence, 190 residues long: Putative manganese efflux pump MntP (190 aa).

A run of 6 helical transmembrane segments spans residues 3–23 (PASI…AAVG), 39–59 (IGLI…FIGQ), 65–85 (VANW…LHMI), 106–128 (WLLA…GLAF), 133–155 (IWVA…VMLG), and 157–177 (AIGT…LIIV).

It belongs to the MntP (TC 9.B.29) family.

It localises to the cell inner membrane. In terms of biological role, probably functions as a manganese efflux pump. This chain is Putative manganese efflux pump MntP, found in Pseudomonas fluorescens (strain ATCC BAA-477 / NRRL B-23932 / Pf-5).